The primary structure comprises 154 residues: Protein X (154 aa).

Residues 68–117 (PCALRFTFARRMETTVNAHQVLPKVLHKRTLGLSAMSTTDLEAYFKDCVF) form a mitochondrial targeting sequence region.

Belongs to the orthohepadnavirus protein X family. In terms of assembly, may form homodimer. May interact with host CEBPA, CFLAR, CREB1, DDB1, E4F1, HBXIP, HSPD1/HSP60, NFKBIA, POLR2E and SMAD4. Interacts with host SMC5-SMC6 complex and induces its degradation. Interacts with host TRPC4AP; leading to prevent ubiquitination of TRPC4AP. Interacts with host PLSCR1; this interaction promotes ubiquitination and degradation of HBx and impairs HBx-mediated cell proliferation. Post-translationally, a fraction may be phosphorylated in insect cells and HepG2 cells, a human hepatoblastoma cell line. Phosphorylated in vitro by host protein kinase C or mitogen-activated protein kinase. N-acetylated in insect cells.

It localises to the host cytoplasm. Its subcellular location is the host nucleus. The protein resides in the host mitochondrion. In terms of biological role, multifunctional protein that plays a role in silencing host antiviral defenses and promoting viral transcription. Does not seem to be essential for HBV infection. May be directly involved in development of cirrhosis and liver cancer (hepatocellular carcinoma). Most of cytosolic activities involve modulation of cytosolic calcium. The effect on apoptosis is controversial depending on the cell types in which the studies have been conducted. May induce apoptosis by localizing in mitochondria and causing loss of mitochondrial membrane potential. May also modulate apoptosis by binding host CFLAR, a key regulator of the death-inducing signaling complex (DISC). Promotes viral transcription by using the host E3 ubiquitin ligase DDB1 to target the SMC5-SMC6 complex to proteasomal degradation. This host complex would otherwise bind to viral episomal DNA, and prevents its transcription. Moderately stimulates transcription of many different viral and cellular transcription elements. Promoters and enhancers stimulated by HBx contain DNA binding sites for NF-kappa-B, AP-1, AP-2, c-EBP, ATF/CREB, or the calcium-activated factor NF-AT. The sequence is that of Protein X from Hepatitis B virus genotype C subtype ayw (isolate China/Tibet127/2002) (HBV-C).